Here is a 180-residue protein sequence, read N- to C-terminus: Large ribosomal subunit protein uL5c (180 aa).

The protein belongs to the universal ribosomal protein uL5 family. As to quaternary structure, part of the 50S ribosomal subunit; contacts the 5S rRNA.

Its subcellular location is the plastid. The protein localises to the chloroplast. Binds 5S rRNA, forms part of the central protuberance of the 50S subunit. This chain is Large ribosomal subunit protein uL5c (rpl5), found in Stigeoclonium helveticum (Green alga).